Here is a 143-residue protein sequence, read N- to C-terminus: Nucleoside diphosphate kinase (143 aa).

Lysine 11, phenylalanine 59, arginine 87, threonine 93, arginine 104, and asparagine 114 together coordinate ATP. Histidine 117 serves as the catalytic Pros-phosphohistidine intermediate.

This sequence belongs to the NDK family. Homotetramer. The cofactor is Mg(2+).

The protein localises to the cytoplasm. The enzyme catalyses a 2'-deoxyribonucleoside 5'-diphosphate + ATP = a 2'-deoxyribonucleoside 5'-triphosphate + ADP. It catalyses the reaction a ribonucleoside 5'-diphosphate + ATP = a ribonucleoside 5'-triphosphate + ADP. In terms of biological role, major role in the synthesis of nucleoside triphosphates other than ATP. The ATP gamma phosphate is transferred to the NDP beta phosphate via a ping-pong mechanism, using a phosphorylated active-site intermediate. In Shewanella sediminis (strain HAW-EB3), this protein is Nucleoside diphosphate kinase.